The primary structure comprises 618 residues: Nuclear cap-binding protein subunit 3 (618 aa).

The tract at residues 1-53 (MAAVRGLRVSVKAGGGAEPEPMEVEEGEVEAAAGRTSPVEATADQTSPREVVP) is disordered. Residues 20 to 29 (EPMEVEEGEV) are compositionally biased toward acidic residues. An RNA recognition motif (RRM) domain region spans residues 117-178 (ETLYICGVDE…LSSKPTNEKG (62 aa)). A WLDD motif; essential for 7-methylguanosine-containing mRNA cap binding motif is present at residues 146-149 (WLDD). Disordered regions lie at residues 170-250 (SSKP…DLRP), 342-366 (PEEP…DDRV), and 426-618 (QLKT…DTDS). Over residues 174 to 188 (TNEKGQRKKDGEHRS) the composition is skewed to basic and acidic residues. Over residues 205–223 (DETEEGEVEEDNPNDAEVE) the composition is skewed to acidic residues. The span at 231–240 (PPETLSQAEQ) shows a compositional bias: polar residues. The segment covering 344–365 (EPIEEEEEEEEEEEEDMDEDDR) has biased composition (acidic residues). Positions 436–450 (SDSAGNSVKSRIGSK) are enriched in polar residues. A compositionally biased stretch (basic and acidic residues) spans 451–468 (SHSEKPADVRLILEEKRQ). Positions 469 to 481 (STASRQQSSSSGK) are enriched in low complexity. Basic and acidic residues-rich tracts occupy residues 507–517 (SRREPLSDVHS), 550–562 (PKEK…KSGE), and 583–596 (IKEK…KSRL). Low complexity predominate over residues 609–618 (ESSSGSDTDS).

It belongs to the NCBP3 family. In terms of assembly, component of an alternative cap-binding complex (CBC) composed of NCBP1/CBP80 and NCBP3.

It localises to the nucleus. Its subcellular location is the cytoplasm. In terms of biological role, associates with NCBP1/CBP80 to form an alternative cap-binding complex (CBC) which plays a key role in mRNA export. NCBP3 serves as adapter protein linking the capped RNAs (m7GpppG-capped RNA) to NCBP1/CBP80. Unlike the conventional CBC with NCBP2 which binds both small nuclear RNA (snRNA) and messenger (mRNA) and is involved in their export from the nucleus, the alternative CBC with NCBP3 does not bind snRNA and associates only with mRNA thereby playing a role in only mRNA export. The polypeptide is Nuclear cap-binding protein subunit 3 (Xenopus laevis (African clawed frog)).